The primary structure comprises 319 residues: Phospho-N-acetylmuramoyl-pentapeptide-transferase (319 aa).

Transmembrane regions (helical) follow at residues 5–25 (LIAF…LIIW), 51–71 (TMGG…ICAY), 79–99 (VWIL…DDGL), 119–139 (LLVA…FALY), 149–169 (VVLF…AVNL), 173–193 (LDGL…WLAF), 197–217 (NFGV…FFMF), 224–246 (IFMG…IFLG), and 299–319 (VDLV…MIWG).

It belongs to the glycosyltransferase 4 family. MraY subfamily. Mg(2+) serves as cofactor.

It localises to the cell membrane. It catalyses the reaction UDP-N-acetyl-alpha-D-muramoyl-L-alanyl-gamma-D-glutamyl-L-lysyl-D-alanyl-D-alanine + di-trans,octa-cis-undecaprenyl phosphate = Mur2Ac(oyl-L-Ala-gamma-D-Glu-L-Lys-D-Ala-D-Ala)-di-trans,octa-cis-undecaprenyl diphosphate + UMP. It functions in the pathway cell wall biogenesis; peptidoglycan biosynthesis. Functionally, catalyzes the initial step of the lipid cycle reactions in the biosynthesis of the cell wall peptidoglycan: transfers peptidoglycan precursor phospho-MurNAc-pentapeptide from UDP-MurNAc-pentapeptide onto the lipid carrier undecaprenyl phosphate, yielding undecaprenyl-pyrophosphoryl-MurNAc-pentapeptide, known as lipid I. The polypeptide is Phospho-N-acetylmuramoyl-pentapeptide-transferase (Lactobacillus delbrueckii subsp. bulgaricus (strain ATCC BAA-365 / Lb-18)).